The following is a 441-amino-acid chain: ATP-dependent protease ATPase subunit HslU (441 aa).

Residues Ile-18, 60–65 (GVGKTE), Asp-254, Glu-319, and Arg-391 each bind ATP.

Belongs to the ClpX chaperone family. HslU subfamily. As to quaternary structure, a double ring-shaped homohexamer of HslV is capped on each side by a ring-shaped HslU homohexamer. The assembly of the HslU/HslV complex is dependent on binding of ATP.

It is found in the cytoplasm. Functionally, ATPase subunit of a proteasome-like degradation complex; this subunit has chaperone activity. The binding of ATP and its subsequent hydrolysis by HslU are essential for unfolding of protein substrates subsequently hydrolyzed by HslV. HslU recognizes the N-terminal part of its protein substrates and unfolds these before they are guided to HslV for hydrolysis. This is ATP-dependent protease ATPase subunit HslU from Shewanella frigidimarina (strain NCIMB 400).